A 163-amino-acid polypeptide reads, in one-letter code: Cyclic pyranopterin monophosphate synthase (163 aa).

Substrate contacts are provided by residues 78–80 (LCH) and 116–117 (ME). The active site involves aspartate 131.

Belongs to the MoaC family. Homohexamer; trimer of dimers.

It carries out the reaction (8S)-3',8-cyclo-7,8-dihydroguanosine 5'-triphosphate = cyclic pyranopterin phosphate + diphosphate. The protein operates within cofactor biosynthesis; molybdopterin biosynthesis. Functionally, catalyzes the conversion of (8S)-3',8-cyclo-7,8-dihydroguanosine 5'-triphosphate to cyclic pyranopterin monophosphate (cPMP). The chain is Cyclic pyranopterin monophosphate synthase from Agrobacterium fabrum (strain C58 / ATCC 33970) (Agrobacterium tumefaciens (strain C58)).